A 469-amino-acid chain; its full sequence is Calcium/calmodulin-dependent protein kinase type IV (469 aa).

2 positions are modified to phosphoserine; by autocatalysis: Ser-11 and Ser-12. Residues 42–296 form the Protein kinase domain; the sequence is FEVESELGRG…TFQALQHPWV (255 aa). ATP contacts are provided by residues 48-56 and Lys-71; that span reads LGRGATSIV. A glycan (O-linked (GlcNAc) threonine) is linked at Thr-53. O-linked (GlcNAc) serine glycosylation is present at Ser-54. The O-linked (GlcNAc) serine glycan is linked to Ser-133. Asp-160 serves as the catalytic Proton acceptor. O-linked (GlcNAc) serine glycosylation occurs at Ser-185. Position 196 is a phosphothreonine (Thr-196). Residues 297-336 are autoinhibitory domain; that stretch reads TGKAANFVHMDTAQKKLQEFNARRKLKAAVKAVVASSRLG. The PP2A-binding stretch occupies residues 302–319; the sequence is NFVHMDTAQKKLQEFNAR. Residues 318-337 form a calmodulin-binding region; the sequence is ARRKLKAAVKAVVASSRLGS. Ser-332 carries the post-translational modification Phosphoserine; by autocatalysis. The tract at residues 336-469 is disordered; that stretch reads GSASSSHTSI…PQQDAIQPEY (134 aa). Ser-337 carries the phosphoserine modification. 3 O-linked (GlcNAc) serine glycosylation sites follow: Ser-340, Ser-341, and Ser-352. Residues 360-374 are compositionally biased toward basic and acidic residues; that stretch reads DAKDSTDLLGKKMQE. Positions 375–388 are enriched in acidic residues; the sequence is EDQEEDQVEAEASA. The segment covering 389–409 has biased composition (basic and acidic residues); sequence DEMRKLQSEEVEKDAGVKEEE. Acidic residues predominate over residues 417–426; sequence DPEDELETDD. Over residues 427–441 the composition is skewed to basic and acidic residues; that stretch reads PEMKRDSEEKLKSVE. Phosphoserine is present on residues Ser-433 and Ser-439. Residues 442–453 are compositionally biased toward acidic residues; it reads EEMDPMTEEEAP.

This sequence belongs to the protein kinase superfamily. CAMK Ser/Thr protein kinase family. CaMK subfamily. As to quaternary structure, monomer. Interacts with protein phosphatase 2A (PPP2CA/PPP2CB); the interaction is mutually exclusive with binding to Ca(2+)/calmodulin. Post-translationally, phosphorylated by CaMKK1 and CaMKK2 on Thr-196. Dephosphorylated by protein phosphatase 2A. Autophosphorylated on Ser-11 and Ser-12. Glycosylation at Ser-185 modulates the phosphorylation of CaMK4 at Thr-196 and negatively regulates its activity toward CREB1 in basal conditions and during early inomycin stimulation. Expressed in brain and testis.

The protein localises to the cytoplasm. It is found in the nucleus. The catalysed reaction is L-seryl-[protein] + ATP = O-phospho-L-seryl-[protein] + ADP + H(+). The enzyme catalyses L-threonyl-[protein] + ATP = O-phospho-L-threonyl-[protein] + ADP + H(+). Its activity is regulated as follows. Activated by Ca(2+)/calmodulin. Binding of calmodulin results in conformational change that relieves intrasteric autoinhibition and allows phosphorylation of Thr-196 within the activation loop by CaMKK1 or CaMKK2. Phosphorylation of Thr-196 results in a 10-20-fold increase in total activity to generate Ca(2+)/calmodulin-independent activity. Autophosphorylation of the N-terminus Ser-11 and Ser-12 is required for full activation. Inactivated by protein phosphatase 2A (PPP2CA/PPP2CB) which dephosphorylates Thr-196, thereby terminating autonomous activity and helping to maintain the enzyme in its autoinhibited state. Calcium/calmodulin-dependent protein kinase that operates in the calcium-triggered CaMKK-CaMK4 signaling cascade and regulates, mainly by phosphorylation, the activity of several transcription activators, such as CREB1, MEF2D, JUN and RORA, which play pivotal roles in immune response, inflammation, and memory consolidation. In the thymus, regulates the CD4(+)/CD8(+) double positive thymocytes selection threshold during T-cell ontogeny. In CD4 memory T-cells, is required to link T-cell antigen receptor (TCR) signaling to the production of IL2, IFNG and IL4 (through the regulation of CREB and MEF2). Regulates the differentiation and survival phases of osteoclasts and dendritic cells (DCs). Mediates DCs survival by linking TLR4 and the regulation of temporal expression of BCL2. Phosphorylates the transcription activator CREB1 on 'Ser-133' in hippocampal neuron nuclei and contribute to memory consolidation and long term potentiation (LTP) in the hippocampus. Can activate the MAP kinases MAPK1/ERK2, MAPK8/JNK1 and MAPK14/p38 and stimulate transcription through the phosphorylation of ELK1 and ATF2. Can also phosphorylate in vitro CREBBP, PRM2, MEF2A and STMN1/OP18. May be involved in spermatogenesis. The chain is Calcium/calmodulin-dependent protein kinase type IV (Camk4) from Mus musculus (Mouse).